Here is a 446-residue protein sequence, read N- to C-terminus: MREIVHLQTGQCGNQIGAAFWQTISGEHGLDGSGVYNGTSDLQLERMNVYFNEASGNKYVPRAVLVDLEPGTMDAVRAGPFGQLFRPDNFVFGQSGAGNNWAKGHYTEGAELVDQVLDVVRREAEGCDCLQGFQITHSLGGGTGAGMGTLLISKIREEFPDRMMATFSVVPSPKVSDTVVEPYNATLSVHQLVENSDETFCIDNEALYDICMRTLKLSNPSYGDLNHLVSAVMSGVTTCLRFPGQLNSDLRKLAVNMVPFPRLHFFMVGFAPLTSRGAHSFRAVTVPELTQQMFDPKNMMAASDFRNGRYLTCSAIFRGKVSMKEVEDQMRNVQQKNVSYFVEWIPNNVQTALCSIPPRGLKMSSTFVGNSTSIQELFKRVGDQFTAMFRRKAFLHWYTGEGMDEMEFTEAESNMNDLVSEYQQYQEASISEGEEEYPEEVSNEEE.

The GTP site is built by Gln-11, Glu-69, Ser-138, Gly-142, Thr-143, Gly-144, Asn-204, and Asn-226. Glu-69 is a Mg(2+) binding site. The segment at 425 to 446 is disordered; it reads YQEASISEGEEEYPEEVSNEEE. Residues 432-446 are compositionally biased toward acidic residues; that stretch reads EGEEEYPEEVSNEEE.

This sequence belongs to the tubulin family. In terms of assembly, dimer of alpha and beta chains. A typical microtubule is a hollow water-filled tube with an outer diameter of 25 nm and an inner diameter of 15 nM. Alpha-beta heterodimers associate head-to-tail to form protofilaments running lengthwise along the microtubule wall with the beta-tubulin subunit facing the microtubule plus end conferring a structural polarity. Microtubules usually have 13 protofilaments but different protofilament numbers can be found in some organisms and specialized cells. Mg(2+) is required as a cofactor.

It is found in the cytoplasm. The protein localises to the cytoskeleton. Tubulin is the major constituent of microtubules, a cylinder consisting of laterally associated linear protofilaments composed of alpha- and beta-tubulin heterodimers. Microtubules grow by the addition of GTP-tubulin dimers to the microtubule end, where a stabilizing cap forms. Below the cap, tubulin dimers are in GDP-bound state, owing to GTPase activity of alpha-tubulin. The protein is Tubulin beta chain (TUB2) of Blumeria hordei (Barley powdery mildew).